The chain runs to 366 residues: Alanine racemase (366 aa).

Catalysis depends on lysine 40, which acts as the Proton acceptor; specific for D-alanine. Residue lysine 40 is modified to N6-(pyridoxal phosphate)lysine. Arginine 136 provides a ligand contact to substrate. Tyrosine 263 serves as the catalytic Proton acceptor; specific for L-alanine. Methionine 310 lines the substrate pocket.

This sequence belongs to the alanine racemase family. Pyridoxal 5'-phosphate is required as a cofactor.

It carries out the reaction L-alanine = D-alanine. The protein operates within amino-acid biosynthesis; D-alanine biosynthesis; D-alanine from L-alanine: step 1/1. Functionally, catalyzes the interconversion of L-alanine and D-alanine. May also act on other amino acids. The sequence is that of Alanine racemase (alr) from Streptococcus pyogenes serotype M2 (strain MGAS10270).